A 466-amino-acid polypeptide reads, in one-letter code: UDP-N-acetylmuramate--L-alanine ligase (466 aa).

ATP is bound at residue 117 to 123 (GTHGKTT).

This sequence belongs to the MurCDEF family.

It localises to the cytoplasm. The catalysed reaction is UDP-N-acetyl-alpha-D-muramate + L-alanine + ATP = UDP-N-acetyl-alpha-D-muramoyl-L-alanine + ADP + phosphate + H(+). It functions in the pathway cell wall biogenesis; peptidoglycan biosynthesis. In terms of biological role, cell wall formation. This Streptomyces griseus subsp. griseus (strain JCM 4626 / CBS 651.72 / NBRC 13350 / KCC S-0626 / ISP 5235) protein is UDP-N-acetylmuramate--L-alanine ligase.